Here is a 192-residue protein sequence, read N- to C-terminus: dTDP-4-amino-4,6-dideoxy-D-glucose acyltransferase (192 aa).

This sequence belongs to the transferase hexapeptide repeat family.

It carries out the reaction dTDP-4-amino-4,6-dideoxy-alpha-D-glucose + acetyl-CoA = dTDP-4-acetamido-4,6-dideoxy-alpha-D-glucose + CoA + H(+). Its pathway is bacterial outer membrane biogenesis; lipopolysaccharide biosynthesis. Its function is as follows. Catalyzes the conversion of dTDP-4-amino-4,6-dideoxy-D-glucose (dTDP-D-Qui4N) to dTDP-4-acetamido-4,6-dideoxy-D-glucose (dTDP-D-Qui4NAc). This Escherichia coli protein is dTDP-4-amino-4,6-dideoxy-D-glucose acyltransferase (vioB).